Reading from the N-terminus, the 296-residue chain is NH(3)-dependent NAD(+) synthetase (296 aa).

30–37 (GVSGGLDS) is an ATP binding site. Residue Asp36 participates in Mg(2+) binding. Arg157 contacts deamido-NAD(+). Glu182 provides a ligand contact to Mg(2+). Deamido-NAD(+) is bound by residues Lys190 and Asp197. ATP is bound by residues Lys206 and Ser228.

Belongs to the NAD synthetase family. Homodimer.

The catalysed reaction is deamido-NAD(+) + NH4(+) + ATP = AMP + diphosphate + NAD(+) + H(+). The protein operates within cofactor biosynthesis; NAD(+) biosynthesis; NAD(+) from deamido-NAD(+) (ammonia route): step 1/1. Catalyzes the ATP-dependent amidation of deamido-NAD to form NAD. Uses ammonia as a nitrogen source. The polypeptide is NH(3)-dependent NAD(+) synthetase (Coprothermobacter proteolyticus (strain ATCC 35245 / DSM 5265 / OCM 4 / BT)).